The primary structure comprises 215 residues: Peroxiredoxin (215 aa).

The Thioredoxin domain occupies 6–161 (PLIGEEFPRV…ILRAVKALQT (156 aa)). Catalysis depends on cysteine 48, which acts as the Cysteine sulfenic acid (-SOH) intermediate. Arginine 124 is a binding site for substrate. Residues cysteine 205 and cysteine 211 are joined by a disulfide bond.

This sequence belongs to the peroxiredoxin family. Prx6 subfamily. Homodecamer. Pentamer of dimers that assemble into a ring structure.

It localises to the cytoplasm. The enzyme catalyses a hydroperoxide + [thioredoxin]-dithiol = an alcohol + [thioredoxin]-disulfide + H2O. Its function is as follows. Thiol-specific peroxidase that catalyzes the reduction of hydrogen peroxide and organic hydroperoxides to water and alcohols, respectively. Plays a role in cell protection against oxidative stress by detoxifying peroxides. The sequence is that of Peroxiredoxin from Thermotoga maritima (strain ATCC 43589 / DSM 3109 / JCM 10099 / NBRC 100826 / MSB8).